A 322-amino-acid chain; its full sequence is Myeloid-associated differentiation marker (322 aa).

Low complexity predominate over residues 1 to 18 (MPVTVTRTTITTTTTSSS). The tract at residues 1–21 (MPVTVTRTTITTTTTSSSGLG) is disordered. Ser-22 is subject to Phosphoserine. MARVEL domains follow at residues 31–163 (ALTQ…ARPG) and 168–319 (YMAT…HLVF). 8 helical membrane passes run 41 to 61 (LLQL…GAWT), 70 to 90 (FTWC…LCGL), 101 to 121 (FPIT…IIYP), 137 to 157 (AIAA…EVAW), 171 to 191 (TVPG…FAFI), 203 to 223 (LEWC…AILL), 239 to 259 (FLSG…VLWP), and 294 to 314 (LAVA…LVHS).

Belongs to the MAL family. Widely expressed. Not detected in thymus.

The protein resides in the membrane. The sequence is that of Myeloid-associated differentiation marker (MYADM) from Homo sapiens (Human).